The following is a 543-amino-acid chain: Protein male-specific lethal-3 (543 aa).

A Chromo domain is found at 10 to 90 (LFNRGEKVLC…KLQRELAEAA (81 aa)). Positions 93-247 (QKTGGYSYKD…THTTDAEKRI (155 aa)) are disordered. 3 stretches are compositionally biased toward basic and acidic residues: residues 180 to 202 (RSRD…DNSS), 210 to 224 (KSKG…ERRS), and 234 to 247 (SPKD…EKRI). The MRG domain maps to 249–542 (QEDRVMLRIS…PLIDQGRELS (294 aa)).

Component of the male-specific lethal (MSL) histone acetyltransferase complex, composed of mof, mle, msl-1, msl-2 and msl-3 proteins, as well as roX1 and roX2 non-coding RNAs. In terms of processing, ubiquitinated by msl-2.

It localises to the nucleus. The protein resides in the chromosome. Its function is as follows. Component of the male-specific lethal (MSL) histone acetyltransferase complex, a multiprotein complex essential for elevating transcription of the single X chromosome in the male (X chromosome dosage compensation). The MSL complex specifically associates with the single X chromosome in males and mediates formation of H4K16ac, promoting a two-fold activation of X chromosome. Acts as a histone reader that specifically recognizes and binds histone H3 trimethylated at 'Lys-36' (H3K36me3) and histone H4 monomethylated at 'Lys-20' (H4K20me1). Within the MSL complex, mediates the spreading of the MSL complex from initiation sites on the male X chromosome to flanking chromatin. Following initial recruitment of the MSL complex to male X chromosome by msl-2, msl-3 binds H3K36me3 and promotes spreading of the MSL complex in cis. In addition to its role in dosage compensation in males, promotes germline stem cell differentiation in females: recognizes and binds H3K36me3, promoting recruitment of the ATAC complex and transcription of genes, such as RpS19b. The protein is Protein male-specific lethal-3 (msl-3) of Drosophila virilis (Fruit fly).